A 374-amino-acid chain; its full sequence is Guanine nucleotide-binding protein subunit alpha-15 (374 aa).

The 334-residue stretch at 41–374 folds into the G-alpha domain; sequence GELKLLLLGP…ARYLDEINLL (334 aa). Residues 44-57 form a G1 motif region; sequence KLLLLGPGESGKST. Residues 49 to 56, 183 to 189, 208 to 212, 277 to 280, and alanine 346 each bind GTP; these read GPGESGKS, LRSRMPT, DVGGQ, and NKTD. Serine 56 provides a ligand contact to Mg(2+). A G2 motif region spans residues 181–189; that stretch reads DVLRSRMPT. Arginine 186 is subject to ADP-ribosylarginine; by cholera toxin. Threonine 189 is a Mg(2+) binding site. The G3 motif stretch occupies residues 204 to 213; it reads LRIVDVGGQK. The segment at 273 to 280 is G4 motif; that stretch reads ILFLNKTD. Residues 344 to 349 form a G5 motif region; sequence TCATDT.

Belongs to the G-alpha family. G(q) subfamily. As to quaternary structure, g proteins are composed of 3 units; alpha, beta and gamma. The alpha chain contains the guanine nucleotide binding site. In terms of tissue distribution, specifically expressed in hematopoietic cells. Expressed in epididymis (at protein level).

In terms of biological role, guanine nucleotide-binding proteins (G proteins) are involved as modulators or transducers in various transmembrane signaling systems. The sequence is that of Guanine nucleotide-binding protein subunit alpha-15 (GNA15) from Homo sapiens (Human).